An 83-amino-acid chain; its full sequence is Large ribosomal subunit protein uL23 (83 aa).

This sequence belongs to the universal ribosomal protein uL23 family. In terms of assembly, part of the 50S ribosomal subunit. Contacts protein L29.

In terms of biological role, binds to 23S rRNA. One of the proteins that surrounds the polypeptide exit tunnel on the outside of the ribosome. In Archaeoglobus fulgidus (strain ATCC 49558 / DSM 4304 / JCM 9628 / NBRC 100126 / VC-16), this protein is Large ribosomal subunit protein uL23.